The following is a 652-amino-acid chain: MSQIHKHPIPAAIAERCLITPEQYDAKYQQSVHDPDAFWGEQGKILDWITPYQTVKNTSFAPGNVSIKWYEDGTLNLAANCLDRHLSERGDQTAIIWEGDDATQSKHISYRELHRDVCRFANTLTSLGIKKGDVVAIYMPMVPEAAVAMLACARIGAVHSVIFGGFSPEAVAGRIIDSSARLVITADEGVRAGRAIPLKKNVDDALKNPGVTSVEHVVVFKRTGGNIEWHEGRDLWWSELVKKASAHHQPVEMNAEDPLFILYTSGSTGKPKGVLHTTGGYLVYAATTFLYAFDYHPGDIYWCTADVGWVTGHSYLLYGPLACGATTLMFEGVPNWPSANRMAQVVDKHKVNILYTAPTAIRALMAEGDKAIDGTDRSSLRILGSVGEPINPEAWEWYWKKIGNEKCPVIDTWWQTETGGFMITPLPGATELKAGSATRPFFGVQPALVDNEGNPQQGATEGNLVITDSWPGQARTLFGDHERFEQTYFSTFKNMYFSGDGARRDEDGYYWITGRVDDVLNVSGHRLGTAEIESALVSHPKIAEAAVVGIPHSIKGQAIYAYVTLNHGEEPSAELYSEVRNWVRKEIGPLATPDVLHWTDSLPKTRSGKIMRRILRKIAAGDTSNLGDTSTLADPGVVEKLLEEKQSIAMPS.

Residues 191 to 194 (RAGR), Thr311, and Asn335 contribute to the CoA site. ATP-binding positions include 387–389 (GEP), 411–416 (DTWWQT), Asp500, and Arg515. Residue Ser523 coordinates CoA. Position 526 (Arg526) interacts with ATP. Mg(2+) contacts are provided by Val537, His539, and Ile542. A CoA-binding site is contributed by Arg584. Lys609 carries the N6-acetyllysine modification.

It belongs to the ATP-dependent AMP-binding enzyme family. Mg(2+) serves as cofactor. Post-translationally, acetylated. Deacetylation by the SIR2-homolog deacetylase activates the enzyme.

It catalyses the reaction acetate + ATP + CoA = acetyl-CoA + AMP + diphosphate. Functionally, catalyzes the conversion of acetate into acetyl-CoA (AcCoA), an essential intermediate at the junction of anabolic and catabolic pathways. Acs undergoes a two-step reaction. In the first half reaction, Acs combines acetate with ATP to form acetyl-adenylate (AcAMP) intermediate. In the second half reaction, it can then transfer the acetyl group from AcAMP to the sulfhydryl group of CoA, forming the product AcCoA. Enables the cell to use acetate during aerobic growth to generate energy via the TCA cycle, and biosynthetic compounds via the glyoxylate shunt. Acetylates CheY, the response regulator involved in flagellar movement and chemotaxis. In Cronobacter sakazakii (strain ATCC BAA-894) (Enterobacter sakazakii), this protein is Acetyl-coenzyme A synthetase.